Here is a 447-residue protein sequence, read N- to C-terminus: Na(+)/H(+) antiporter NhaA 2 (447 aa).

Transmembrane regions (helical) follow at residues 30 to 50, 81 to 101, 117 to 137, 146 to 166, 175 to 195, 199 to 219, 220 to 240, 315 to 335, 350 to 370, 383 to 403, and 415 to 435; these read FIHI…LAVL, LHKW…ALEL, LLSI…YLLL, GWGT…ALLG, IFML…VAIG, AVDW…RAMA, FLGV…WLVI, LLHP…NAGV, VFVG…WIAV, WGMV…ALFI, and AAKL…FLCL.

The protein belongs to the NhaA Na(+)/H(+) (TC 2.A.33) antiporter family.

The protein resides in the cell inner membrane. The enzyme catalyses Na(+)(in) + 2 H(+)(out) = Na(+)(out) + 2 H(+)(in). Functionally, na(+)/H(+) antiporter that extrudes sodium in exchange for external protons. The protein is Na(+)/H(+) antiporter NhaA 2 of Vibrio vulnificus (strain CMCP6).